Reading from the N-terminus, the 31-residue chain is Monocyclic monoterpene ketone monooxygenase (31 aa).

An FAD-binding site is contributed by 20 to 25 (GAGFXG).

In terms of assembly, monomer. The cofactor is FAD.

The catalysed reaction is 1-hydroxylimonen-2-one + NADPH + O2 = 3-isopropenyl-6-oxoheptanoate + NADP(+) + H2O. It carries out the reaction (1R,4S)-1-hydroxylimonen-2-one + NADPH + O2 + H(+) = (4S,7S)-7-hydroxy-4-isopropenyl-7-methyloxepan-2-one + NADP(+) + H2O. It catalyses the reaction (1S,4R)-1-hydroxylimonen-2-one + NADPH + O2 + H(+) = (4R,7R)-7-hydroxy-4-isopropenyl-7-methyloxepan-2-one + NADP(+) + H2O. The enzyme catalyses (1R,4R)-dihydrocarvone + NADPH + O2 + H(+) = (4R,7R)-4-isopropenyl-7-methyloxepan-2-one + NADP(+) + H2O. The catalysed reaction is (1S,4R)-menthone + NADPH + O2 + H(+) = (4S,7R)-7-isopropyl-4-methyloxepan-2-one + NADP(+) + H2O. It carries out the reaction (1R,4S)-menthone + NADPH + O2 + H(+) = (4R,7S)-7-isopropyl-4-methyloxepan-2-one + NADP(+) + H2O. It catalyses the reaction (1S,4R)-isodihydrocarvone + NADPH + O2 + H(+) = (3S,6R)-6-isopropenyl-3-methyloxepan-2-one + NADP(+) + H2O. It functions in the pathway terpene metabolism; monoterpene degradation. Catalyzes the NADPH- and oxygen-dependent oxidation of the monocyclic monoterpene ketones 1-hydroxy-2-oxolimonene, dihydrocarvone and menthone. Is able to convert all enantiomers of these natural substrates with almost equal efficiency. Is thus involved in the conversion of the monocyclic monoterpene ketone intermediates formed in the degradation pathways of all stereoisomers of three different monocyclic monoterpenes, i.e. limonene, (dihydro)carveol and menthol, which likely make R.erythropolis able to grow on these compounds as the sole source of carbon and energy. In Rhodococcus erythropolis (Arthrobacter picolinophilus), this protein is Monocyclic monoterpene ketone monooxygenase.